Reading from the N-terminus, the 216-residue chain is Ribosomal RNA small subunit methyltransferase G (216 aa).

Residues Gly73, Leu78, 124–125, and Arg139 each bind S-adenosyl-L-methionine; that span reads AE.

This sequence belongs to the methyltransferase superfamily. RNA methyltransferase RsmG family.

The protein localises to the cytoplasm. Specifically methylates the N7 position of guanine in position 518 of 16S rRNA. In Paenarthrobacter aurescens (strain TC1), this protein is Ribosomal RNA small subunit methyltransferase G.